We begin with the raw amino-acid sequence, 414 residues long: Glutamyl-tRNA reductase (414 aa).

Substrate contacts are provided by residues 49-52 (TCNR), S108, 113-115 (EPQ), and Q119. The active-site Nucleophile is the C50. An NADP(+)-binding site is contributed by 188–193 (GAGQTG).

Belongs to the glutamyl-tRNA reductase family. As to quaternary structure, homodimer.

It catalyses the reaction (S)-4-amino-5-oxopentanoate + tRNA(Glu) + NADP(+) = L-glutamyl-tRNA(Glu) + NADPH + H(+). It functions in the pathway porphyrin-containing compound metabolism; protoporphyrin-IX biosynthesis; 5-aminolevulinate from L-glutamyl-tRNA(Glu): step 1/2. Its function is as follows. Catalyzes the NADPH-dependent reduction of glutamyl-tRNA(Glu) to glutamate 1-semialdehyde (GSA). This Francisella tularensis subsp. holarctica (strain LVS) protein is Glutamyl-tRNA reductase.